Here is a 107-residue protein sequence, read N- to C-terminus: Benzene 1,2-dioxygenase system ferredoxin subunit (107 aa).

Residues 4-99 (TYILRQSDLP…IKVEGDEVHV (96 aa)) enclose the Rieske domain. [2Fe-2S] cluster contacts are provided by Cys43, His45, Cys62, and His65.

This sequence belongs to the bacterial ring-hydroxylating dioxygenase ferredoxin component family. This dioxygenase system consists of four proteins: the two subunits of the hydroxylase component (BnzA and BnzB), a ferredoxin (BnzC) and a ferredoxin reductase (BnzD).

It participates in aromatic compound metabolism; benzene degradation; catechol from benzene: step 1/2. This protein seems to be a 2Fe-2S ferredoxin. The chain is Benzene 1,2-dioxygenase system ferredoxin subunit (bnzC) from Pseudomonas putida (Arthrobacter siderocapsulatus).